Consider the following 165-residue polypeptide: Nucleoside-triphosphatase THEP1 (165 aa).

ATP is bound by residues 7–14 and 93–100; these read GRPGVGKT and LVIIDEVG.

It belongs to the THEP1 NTPase family.

The catalysed reaction is a ribonucleoside 5'-triphosphate + H2O = a ribonucleoside 5'-diphosphate + phosphate + H(+). In terms of biological role, has nucleotide phosphatase activity towards ATP, GTP, CTP, TTP and UTP. May hydrolyze nucleoside diphosphates with lower efficiency. This Archaeoglobus fulgidus (strain ATCC 49558 / DSM 4304 / JCM 9628 / NBRC 100126 / VC-16) protein is Nucleoside-triphosphatase THEP1.